We begin with the raw amino-acid sequence, 359 residues long: 3-dehydroquinate synthase (359 aa).

NAD(+) contacts are provided by residues 71–76 (DGEQHK), 105–109 (GVIGD), 129–130 (TT), K142, and K151. Zn(2+)-binding residues include E184, H247, and H264.

The protein belongs to the sugar phosphate cyclases superfamily. Dehydroquinate synthase family. It depends on NAD(+) as a cofactor. Requires Co(2+) as cofactor. Zn(2+) serves as cofactor.

It is found in the cytoplasm. It catalyses the reaction 7-phospho-2-dehydro-3-deoxy-D-arabino-heptonate = 3-dehydroquinate + phosphate. The protein operates within metabolic intermediate biosynthesis; chorismate biosynthesis; chorismate from D-erythrose 4-phosphate and phosphoenolpyruvate: step 2/7. Catalyzes the conversion of 3-deoxy-D-arabino-heptulosonate 7-phosphate (DAHP) to dehydroquinate (DHQ). The sequence is that of 3-dehydroquinate synthase from Chromobacterium violaceum (strain ATCC 12472 / DSM 30191 / JCM 1249 / CCUG 213 / NBRC 12614 / NCIMB 9131 / NCTC 9757 / MK).